We begin with the raw amino-acid sequence, 355 residues long: UDP-3-O-acylglucosamine N-acyltransferase (355 aa).

Catalysis depends on His258, which acts as the Proton acceptor.

It belongs to the transferase hexapeptide repeat family. LpxD subfamily. As to quaternary structure, homotrimer.

It catalyses the reaction a UDP-3-O-[(3R)-3-hydroxyacyl]-alpha-D-glucosamine + a (3R)-hydroxyacyl-[ACP] = a UDP-2-N,3-O-bis[(3R)-3-hydroxyacyl]-alpha-D-glucosamine + holo-[ACP] + H(+). Its pathway is bacterial outer membrane biogenesis; LPS lipid A biosynthesis. Functionally, catalyzes the N-acylation of UDP-3-O-acylglucosamine using 3-hydroxyacyl-ACP as the acyl donor. Is involved in the biosynthesis of lipid A, a phosphorylated glycolipid that anchors the lipopolysaccharide to the outer membrane of the cell. The polypeptide is UDP-3-O-acylglucosamine N-acyltransferase (Rhizobium rhizogenes (strain K84 / ATCC BAA-868) (Agrobacterium radiobacter)).